The primary structure comprises 226 residues: MKEYRALLALLHLASPSLPIGAYTYSQGLESAIEQGLVRDETSAREWLVEMLGIFTDFELPILQRLLKAFSERDEAAVSFWTECFVASRETSEFRAETVQMGYSLAKLVIDLKLGDDSMRAILENQQAIPLPTAFACAAEALGIPHEESLLGMLFSMAENQVLACVKSVPLGQLSGQRLLLSLHPVIEACSIRASQLTDDELSSWAPGLSLLSMQHEVQYSRIYRS.

This sequence belongs to the UreF family. In terms of assembly, ureD, UreF and UreG form a complex that acts as a GTP-hydrolysis-dependent molecular chaperone, activating the urease apoprotein by helping to assemble the nickel containing metallocenter of UreC. The UreE protein probably delivers the nickel.

The protein localises to the cytoplasm. Required for maturation of urease via the functional incorporation of the urease nickel metallocenter. The chain is Urease accessory protein UreF from Nitrosospira multiformis (strain ATCC 25196 / NCIMB 11849 / C 71).